We begin with the raw amino-acid sequence, 389 residues long: Trans-2-enoyl-CoA reductase [NADH] (389 aa).

Residues 47 to 52 (GASTGY), 73 to 74 (FE), 110 to 111 (DA), and 138 to 139 (LA) contribute to the NAD(+) site. Residue Y224 participates in substrate binding. Residue Y234 is the Proton donor of the active site. Residues K243 and 272–274 (LVT) contribute to the NAD(+) site.

The protein belongs to the TER reductase family. Monomer.

The enzyme catalyses a 2,3-saturated acyl-CoA + NAD(+) = a (2E)-enoyl-CoA + NADH + H(+). The protein operates within lipid metabolism; fatty acid biosynthesis. In terms of biological role, involved in the fatty acid synthesis (FAS II). Catalyzes the reduction of a carbon-carbon double bond in an enoyl moiety that is covalently linked to a coenzyme A (CoA). In Clostridium perfringens (strain 13 / Type A), this protein is Trans-2-enoyl-CoA reductase [NADH].